A 475-amino-acid chain; its full sequence is Vasculin-like protein 1 (475 aa).

Residues Ser-49 and Ser-76 each carry the phosphoserine modification. Disordered stretches follow at residues 92–115 (NLSG…GSTG) and 160–191 (PSLN…SAKQ). Ser-202 is modified (phosphoserine). 2 disordered regions span residues 237-271 (LVPK…EAAL) and 292-318 (PKES…RRTT). Residues 294 to 311 (ESPSSTTPPIEISSSRLT) show a composition bias toward low complexity. Residue Thr-300 is modified to Phosphothreonine. Ser-383 carries the phosphoserine modification. The tract at residues 456–475 (CEDSDTETSSSETSDDDAWK) is disordered.

The protein belongs to the vasculin family.

It localises to the nucleus. Functionally, possible transcription factor. This Rattus norvegicus (Rat) protein is Vasculin-like protein 1 (Gpbp1l1).